The primary structure comprises 1058 residues: COP1-interacting protein 7 (1058 aa).

3 disordered regions span residues 123-147, 262-281, and 330-463; these read LGGTWTSQKSTALSKTKGETDGDTV, HGNSMDASSQGSFETGQEGR, and MGDV…GNDN. 2 stretches are compositionally biased toward polar residues: residues 126–136 and 262–276; these read TWTSQKSTALS and HGNSMDASSQGSFET. A Nuclear localization signal 1 motif is present at residues 340-347; the sequence is SKKKKKKK. Residues 340–353 show a composition bias toward basic residues; it reads SKKKKKKKKNKKKS. Residues 403–414 are compositionally biased toward acidic residues; that stretch reads DSDESGEEEGFV. The Nuclear localization signal 2 motif lies at 431–438; it reads ERRHKSTS. A compositionally biased stretch (basic residues) spans 432-446; that stretch reads RRHKSTSHRQRKHKS. Residues 447–462 show a composition bias toward basic and acidic residues; it reads HNGDDDSSNKETKGND. S477 is subject to Phosphoserine. The tract at residues 708–887 is disordered; it reads AGEQTLDGKE…KSVELSRDPS (180 aa). Basic and acidic residues predominate over residues 757 to 773; sequence SKSEMEEERKKRMEELL. The Nuclear localization signal 3 motif lies at 764–771; sequence ERKKRMEE. A compositionally biased stretch (low complexity) spans 783 to 808; that stretch reads KSSGGSVSSSLASKKTPTVTKSVKSS. 2 stretches are compositionally biased toward basic and acidic residues: residues 860–869 and 878–887; these read KTEKAQEKKS and KSVELSRDPS. S915, S986, and S992 each carry phosphoserine. Residues 1020-1041 are disordered; it reads STPPATEADHSRKKWNSEETSP. Positions 1026–1040 are enriched in basic and acidic residues; that stretch reads EADHSRKKWNSEETS.

Interacts with COP1.

It is found in the nucleus. In terms of biological role, exhibits transcriptional activation activity. Positive regulator of light-regulated genes, probably being a direct downstream target of COP1 for mediating light control of gene expression. In Arabidopsis thaliana (Mouse-ear cress), this protein is COP1-interacting protein 7.